A 348-amino-acid chain; its full sequence is Phosphoribosylformylglycinamidine cyclo-ligase (348 aa).

Belongs to the AIR synthase family.

Its subcellular location is the cytoplasm. It carries out the reaction 2-formamido-N(1)-(5-O-phospho-beta-D-ribosyl)acetamidine + ATP = 5-amino-1-(5-phospho-beta-D-ribosyl)imidazole + ADP + phosphate + H(+). Its pathway is purine metabolism; IMP biosynthesis via de novo pathway; 5-amino-1-(5-phospho-D-ribosyl)imidazole from N(2)-formyl-N(1)-(5-phospho-D-ribosyl)glycinamide: step 2/2. The sequence is that of Phosphoribosylformylglycinamidine cyclo-ligase from Geotalea uraniireducens (strain Rf4) (Geobacter uraniireducens).